A 614-amino-acid chain; its full sequence is V-type proton ATPase catalytic subunit A isoform 1 (614 aa).

Residue Gly-247–Thr-254 coordinates ATP.

Belongs to the ATPase alpha/beta chains family. As to quaternary structure, V-ATPase is a heteromultimeric enzyme made up of two complexes: the ATP-hydrolytic V1 complex and the proton translocation V0 complex. The V1 complex consists of three catalytic AB heterodimers that form a heterohexamer, three peripheral stalks each consisting of EG heterodimers, one central rotor including subunits D and F, and the regulatory subunits C and H. The proton translocation complex V0 consists of the proton transport subunit a, a ring of proteolipid subunits c9c'', rotary subunit d, subunits e and f, and the accessory subunits VhaAC45 and ATP6AP2.

It carries out the reaction ATP + H2O + 4 H(+)(in) = ADP + phosphate + 5 H(+)(out). Its activity is regulated as follows. ATP hydrolysis occurs at the interface between the nucleotide-binding domains of subunits A and B. ATP hydrolysis triggers a conformational change in the subunits D and F, which induces a shift of subunit d. The c-ring is subsequently rotated and results in a continuous proton translocation across the membrane. Functionally, catalytic subunit of the V1 complex of vacuolar(H+)-ATPase (V-ATPase), a multisubunit enzyme composed of a peripheral complex (V1) that hydrolyzes ATP and a membrane integral complex (V0) that translocates protons. V-ATPase is responsible for acidifying and maintaining the pH of intracellular compartments and in some cell types, is targeted to the plasma membrane, where it is responsible for acidifying the extracellular environment. This Drosophila melanogaster (Fruit fly) protein is V-type proton ATPase catalytic subunit A isoform 1 (Vha68-1).